The following is a 149-amino-acid chain: Large ribosomal subunit protein eL24A (149 aa).

2 stretches are compositionally biased toward basic and acidic residues: residues 93–102 (KRNQRPEVRA) and 116–125 (KAASESEKKA). The disordered stretch occupies residues 93–149 (KRNQRPEVRAAARAAALKQRKDKKAASESEKKAIKAKSAASSARGQAIKNAKAAARH).

The protein belongs to the eukaryotic ribosomal protein eL24 family. In terms of assembly, component of the large ribosomal subunit (LSU). Mature yeast ribosomes consist of a small (40S) and a large (60S) subunit. The 40S small subunit contains 1 molecule of ribosomal RNA (18S rRNA) and at least 33 different proteins. The large 60S subunit contains 3 rRNA molecules (25S, 5.8S and 5S rRNA) and at least 46 different proteins.

It localises to the cytoplasm. Its function is as follows. Component of the ribosome, a large ribonucleoprotein complex responsible for the synthesis of proteins in the cell. The small ribosomal subunit (SSU) binds messenger RNAs (mRNAs) and translates the encoded message by selecting cognate aminoacyl-transfer RNA (tRNA) molecules. The large subunit (LSU) contains the ribosomal catalytic site termed the peptidyl transferase center (PTC), which catalyzes the formation of peptide bonds, thereby polymerizing the amino acids delivered by tRNAs into a polypeptide chain. The nascent polypeptides leave the ribosome through a tunnel in the LSU and interact with protein factors that function in enzymatic processing, targeting, and the membrane insertion of nascent chains at the exit of the ribosomal tunnel. The chain is Large ribosomal subunit protein eL24A (rpl2401) from Schizosaccharomyces pombe (strain 972 / ATCC 24843) (Fission yeast).